The primary structure comprises 739 residues: UPF0313 protein YgiQ (739 aa).

Residues 372 to 650 enclose the Radical SAM core domain; it reads AYEMIRFSVN…KALLRYHDPA (279 aa). Positions 386, 390, and 393 each coordinate [4Fe-4S] cluster. The tract at residues 686-739 is disordered; it reads EARRQNRNTRPALTKHTPMATQCQTPATAKKASSTQSRPVNAGAKKRPKAAVGR. The segment covering 704–724 has biased composition (polar residues); sequence MATQCQTPATAKKASSTQSRP. Residues 729 to 739 are compositionally biased toward basic residues; that stretch reads AKKRPKAAVGR.

This sequence belongs to the UPF0313 family. Requires [4Fe-4S] cluster as cofactor.

The sequence is that of UPF0313 protein YgiQ from Escherichia coli O157:H7.